We begin with the raw amino-acid sequence, 923 residues long: Protein dct-6 (923 aa).

Residues 312-347 (DMNDQIEQMISLLVDELSELEKLEQLCKEVERTGNQ) adopt a coiled-coil conformation.

Its function is as follows. May have a role in tumor suppression. The polypeptide is Protein dct-6 (dct-6) (Caenorhabditis elegans).